Here is a 213-residue protein sequence, read N- to C-terminus: Ras-like protein rasX (213 aa).

16-23 (GDGGVGKT) serves as a coordination point for GTP. The Effector region motif lies at 38-46 (YDPTIEDSY). GTP is bound by residues 63–67 (DTAGQ) and 122–125 (NKSD). Cys-210 bears the Cysteine methyl ester mark. A lipid anchor (S-geranylgeranyl cysteine) is attached at Cys-210. The propeptide at 211 to 213 (KMM) is removed in mature form.

This sequence belongs to the small GTPase superfamily. Ras family.

It localises to the cell membrane. It carries out the reaction GTP + H2O = GDP + phosphate + H(+). Ras proteins bind GDP/GTP and possess intrinsic GTPase activity. The polypeptide is Ras-like protein rasX (rasX) (Dictyostelium discoideum (Social amoeba)).